Consider the following 308-residue polypeptide: Protein FdhE homolog (308 aa).

Belongs to the FdhE family.

The protein localises to the cytoplasm. Necessary for formate dehydrogenase activity. The sequence is that of Protein FdhE homolog from Edwardsiella ictaluri (strain 93-146).